Here is an 826-residue protein sequence, read N- to C-terminus: Eukaryotic translation initiation factor 3 subunit C (826 aa).

Disordered stretches follow at residues 1 to 71 (MSRF…GKGA) and 205 to 227 (SGGDVAEEEEEENKEDKPKPRAK). Positions 10–20 (DSDDSSSDEDL) are enriched in acidic residues. The span at 21-30 (YGSGSESGSD) shows a compositional bias: low complexity. A compositionally biased stretch (acidic residues) spans 32 to 65 (SQDEQDGGDDNDDDMSDDSMFADDSDDDSDDDED). The segment covering 218–227 (KEDKPKPRAK) has biased composition (basic and acidic residues). A PCI domain is found at 605-779 (FHTHINLELL…NSVVFTQAVQ (175 aa)).

Belongs to the eIF-3 subunit C family. In terms of assembly, component of the eukaryotic translation initiation factor 3 (eIF-3) complex.

The protein localises to the cytoplasm. Functionally, component of the eukaryotic translation initiation factor 3 (eIF-3) complex, which is involved in protein synthesis of a specialized repertoire of mRNAs and, together with other initiation factors, stimulates binding of mRNA and methionyl-tRNAi to the 40S ribosome. The eIF-3 complex specifically targets and initiates translation of a subset of mRNAs involved in cell proliferation. The chain is Eukaryotic translation initiation factor 3 subunit C from Yarrowia lipolytica (strain CLIB 122 / E 150) (Yeast).